The following is a 298-amino-acid chain: N-acetylmuramic acid 6-phosphate etherase (298 aa).

One can recognise an SIS domain in the interval 55-218 (IHTQVSGGGR…STGLMIKSGK (164 aa)). Glu83 functions as the Proton donor in the catalytic mechanism. Glu114 is a catalytic residue.

Belongs to the GCKR-like family. MurNAc-6-P etherase subfamily. In terms of assembly, homodimer.

The enzyme catalyses N-acetyl-D-muramate 6-phosphate + H2O = N-acetyl-D-glucosamine 6-phosphate + (R)-lactate. It participates in amino-sugar metabolism; 1,6-anhydro-N-acetylmuramate degradation. It functions in the pathway amino-sugar metabolism; N-acetylmuramate degradation. Its pathway is cell wall biogenesis; peptidoglycan recycling. Its function is as follows. Specifically catalyzes the cleavage of the D-lactyl ether substituent of MurNAc 6-phosphate, producing GlcNAc 6-phosphate and D-lactate. Together with AnmK, is also required for the utilization of anhydro-N-acetylmuramic acid (anhMurNAc) either imported from the medium or derived from its own cell wall murein, and thus plays a role in cell wall recycling. In Escherichia coli O1:K1 / APEC, this protein is N-acetylmuramic acid 6-phosphate etherase.